The chain runs to 587 residues: Aspartate--tRNA ligase (587 aa).

L-aspartate is bound at residue Glu173. The tract at residues 197–200 (QTLK) is aspartate. Arg219 serves as a coordination point for L-aspartate. ATP is bound by residues 219-221 (RDE) and Gln228. His446 contributes to the L-aspartate binding site. Glu480 contributes to the ATP binding site. Arg487 is an L-aspartate binding site. 532–535 (GLDR) is a binding site for ATP.

It belongs to the class-II aminoacyl-tRNA synthetase family. Type 1 subfamily. In terms of assembly, homodimer.

The protein localises to the cytoplasm. It catalyses the reaction tRNA(Asp) + L-aspartate + ATP = L-aspartyl-tRNA(Asp) + AMP + diphosphate. Catalyzes the attachment of L-aspartate to tRNA(Asp) in a two-step reaction: L-aspartate is first activated by ATP to form Asp-AMP and then transferred to the acceptor end of tRNA(Asp). This Bacteroides thetaiotaomicron (strain ATCC 29148 / DSM 2079 / JCM 5827 / CCUG 10774 / NCTC 10582 / VPI-5482 / E50) protein is Aspartate--tRNA ligase.